A 426-amino-acid polypeptide reads, in one-letter code: MSAPLADIDPDIAGLLGQELGRQRDTLEMIASENFVPRAVLQAQGSVLTNKYAEGLPGRRYYGGCEYVDVVENIARDRAKALFDADFANVQPHSGAQANAAVLHALMTPGERLLGLDLANGGHLTHGMKLNFSGKLYDVGFYGVDPTTHLIDMDAVRAKALEFRPKVIIAGWSAYPRVLDFAAFASIADEVGAKLWVDMAHFAGLVAAGLHPSPVPHADVVSTTVHKTLGGPRSGLILGKQEYAKSINSAVFPGQQGGPLMHVIAAKAVALKIAGTEEFADRQRRTLSGARILAERLSGADVAAAGVSVVSGGTDVHLVLVDLRNSELDGQAAEDLLHEIGITVNRNAVPNDPRPPMVTSGLRVGTPALATRGFGGAEFSEVADVIATALAGGRGADLAALRDRVTRLARDFPLYEGLEDWALVGR.

Residues leucine 118 and glycine 122–leucine 124 each bind (6S)-5,6,7,8-tetrahydrofolate. Lysine 227 bears the N6-(pyridoxal phosphate)lysine mark.

The protein belongs to the SHMT family. In terms of assembly, homodimer. Requires pyridoxal 5'-phosphate as cofactor.

Its subcellular location is the cytoplasm. The catalysed reaction is (6R)-5,10-methylene-5,6,7,8-tetrahydrofolate + glycine + H2O = (6S)-5,6,7,8-tetrahydrofolate + L-serine. The protein operates within one-carbon metabolism; tetrahydrofolate interconversion. Its pathway is amino-acid biosynthesis; glycine biosynthesis; glycine from L-serine: step 1/1. Its function is as follows. Catalyzes the reversible interconversion of serine and glycine with tetrahydrofolate (THF) serving as the one-carbon carrier. This reaction serves as the major source of one-carbon groups required for the biosynthesis of purines, thymidylate, methionine, and other important biomolecules. Also exhibits THF-independent aldolase activity toward beta-hydroxyamino acids, producing glycine and aldehydes, via a retro-aldol mechanism. This Mycolicibacterium paratuberculosis (strain ATCC BAA-968 / K-10) (Mycobacterium paratuberculosis) protein is Serine hydroxymethyltransferase.